The chain runs to 905 residues: Clumping factor B (905 aa).

An N-terminal signal peptide occupies residues 1 to 44 (MKKRIDYLSNKQNKYSIRRFTVGTTSVIVGATILFGIGNHQAQA). Residues 15–26 (YSIRRFTVGTTS) carry the YSIRK-G/S signaling motif motif. 2 stretches are compositionally biased toward polar residues: residues 44–61 (ASEQSNDTTQSSKNNASA) and 68–101 (MIETPQLNTTANDTSDISANTNSANVDSTAKPMS). The segment at 44-191 (ASEQSNDTTQ…AQGTSKPSVR (148 aa)) is disordered. A ligand binding A region region spans residues 45 to 542 (SEQSNDTTQS…GSADGDSAVN (498 aa)). The segment covering 102–119 (TQTSNTTTTEPASTNETP) has biased composition (low complexity). A compositionally biased stretch (polar residues) spans 134 to 189 (QDQTVPQEANSQVDNKTTNDANSIATNSELKNPQTLDLPQSSPQTISNAQGTSKPS). An MIDAS-like motif motif is present at residues 272 to 276 (DYSNS). The tract at residues 530-877 (YGGGSADGDS…ETGDKSENTN (348 aa)) is disordered. The segment covering 545 to 555 (DPTPGPPVDPE) has biased composition (pro residues). Residues 556–829 (PSPDPEPEPS…SDSDSDSDSD (274 aa)) show a composition bias toward acidic residues. Residues 833-844 (RVTPPNNEQKAP) show a composition bias toward polar residues. Residues 861 to 874 (HKTDALPETGDKSE) show a composition bias toward basic and acidic residues. The LPXTG sorting signal motif lies at 866–870 (LPETG). At threonine 869 the chain carries Pentaglycyl murein peptidoglycan amidated threonine. The propeptide at 870 to 905 (GDKSENTNATLFGAMMALLGSLLLFRKRKQDHKEKA) is removed by sortase.

The protein belongs to the serine-aspartate repeat-containing protein (SDr) family. Post-translationally, proteolytically cleaved by aureolysin (aur). This cleavage leads to the inactivation of ClfB.

The protein resides in the secreted. It is found in the cell wall. Cell surface-associated protein implicated in virulence by promoting bacterial attachment to both alpha- and beta-chains of human fibrinogen and inducing the formation of bacterial clumps. The chain is Clumping factor B (clfB) from Staphylococcus aureus (strain MSSA476).